The following is a 504-amino-acid chain: MSVQVAAPGSAGLGPERLSPEELVRQTRQVVQGLEALRAEHHGLAGHLAEALAGQGPAAGLEMLEEKQQVVSHSLEAIELGLGEAQVLLALSAHVGALEAEKQRLRSQARRLAQENVWLREELEETQRRLRASEESVAQLEEEKRHLEFLGQLRQYDPPAESQQSESPPRRDSLASLFPSEEEERKGPEAAGAAAAQQGGYEIPARLRTLHNLVIQYAGQGRYEVAVPLCRQALEDLERSSGHCHPDVATMLNILALVYRDQNKYKEATDLLHDALQIREQTLGPEHPAVAATLNNLAVLYGKRGRYREAEPLCQRALEIREKVLGADHPDVAKQLNNLALLCQNQGKFEDVERHYARALSIYEALGGPHDPNVAKTKNNLASAYLKQNKYQQAEELYKEILHKEDLPAPLGAPNTGTAGDAEQALRRSSSLSKIRESIRRGSEKLVSRLRGEAAAGAAGMKRAMSLNTLNVDAPRAPGTQFPSWHLDKAPRTLSASTQDLSPH.

Positions 90–150 form a coiled coil; sequence ALSAHVGALE…EEEKRHLEFL (61 aa). The disordered stretch occupies residues 153–197; the sequence is LRQYDPPAESQQSESPPRRDSLASLFPSEEEERKGPEAAGAAAAQ. Residues 158–167 show a composition bias toward low complexity; the sequence is PPAESQQSES. Residue S173 is modified to Phosphoserine. TPR repeat units follow at residues 207 to 240, 249 to 282, 291 to 324, 333 to 366, and 375 to 408; these read LRTL…LERS, ATML…REQT, AATL…REKV, AKQL…YEAL, and AKTK…EDLP. Positions 411 to 438 are disordered; the sequence is LGAPNTGTAGDAEQALRRSSSLSKIRES. Residue S466 is modified to Phosphoserine. The tract at residues 472–504 is disordered; sequence VDAPRAPGTQFPSWHLDKAPRTLSASTQDLSPH. A compositionally biased stretch (polar residues) spans 494–504; sequence LSASTQDLSPH. A Phosphothreonine modification is found at T498. The residue at position 502 (S502) is a Phosphoserine.

The protein belongs to the kinesin light chain family. In terms of assembly, oligomer composed of two heavy chains and two light chains. Associates with microtubulin in an ATP-dependent manner. Interacts with KIF5C. Interacts with ODF1. Interacts with LRGUK. Interacts with VDAC2.

The protein localises to the cytoplasm. The protein resides in the cytoskeleton. Its subcellular location is the mitochondrion. Functionally, kinesin is a microtubule-associated force-producing protein that may play a role in organelle transport. Plays a role during spermiogenesis in the development of the sperm tail midpiece and in the normal function of spermatozoa. May play a role in the formation of the mitochondrial sheath formation in the developing spermatid midpiece. The protein is Kinesin light chain 3 (KLC3) of Homo sapiens (Human).